A 371-amino-acid polypeptide reads, in one-letter code: 4-hydroxyphenylpyruvate dioxygenase-like protein (371 aa).

VOC domains follow at residues 7 to 135 and 160 to 328; these read RLCH…LLQR and HVDH…VFTK. Positions 163, 258, and 339 each coordinate Fe cation.

It belongs to the 4HPPD family. It depends on Fe cation as a cofactor.

The protein localises to the mitochondrion. The enzyme catalyses 3-(4-hydroxyphenyl)pyruvate + O2 = (S)-4-hydroxymandelate + CO2. Iron-dependent dioxygenase that catalyzes the conversion of 4-hydroxyphenylpyruvate (4-HPPA) to 4-hydroxymandelate (4-HMA) in the mitochondria, one of the steps in the biosynthesis of coenzyme Q10 from tyrosine. The sequence is that of 4-hydroxyphenylpyruvate dioxygenase-like protein from Mus musculus (Mouse).